A 179-amino-acid polypeptide reads, in one-letter code: MILYLHGFDATSPGNHEKIRQLQFIDKDVRLLSYSTLHPKHDMQHLLNEVSKQLKLTDDSEPIIIGVGLGGYWAERIGYLNGLKSVLINPNLTPQDNMLGKIDRPEEYSDIANKCVSEFREKNSGKSLVILSRNDDTFDNQVVSDELSRFYEICWDEEQPHKFPVLASQLPRIQAFKKG.

The protein belongs to the UPF0227 family.

The sequence is that of UPF0227 protein Swoo_1808 from Shewanella woodyi (strain ATCC 51908 / MS32).